Reading from the N-terminus, the 226-residue chain is Leucyl/phenylalanyl-tRNA--protein transferase (226 aa).

It belongs to the L/F-transferase family.

It localises to the cytoplasm. It catalyses the reaction N-terminal L-lysyl-[protein] + L-leucyl-tRNA(Leu) = N-terminal L-leucyl-L-lysyl-[protein] + tRNA(Leu) + H(+). The catalysed reaction is N-terminal L-arginyl-[protein] + L-leucyl-tRNA(Leu) = N-terminal L-leucyl-L-arginyl-[protein] + tRNA(Leu) + H(+). It carries out the reaction L-phenylalanyl-tRNA(Phe) + an N-terminal L-alpha-aminoacyl-[protein] = an N-terminal L-phenylalanyl-L-alpha-aminoacyl-[protein] + tRNA(Phe). In terms of biological role, functions in the N-end rule pathway of protein degradation where it conjugates Leu, Phe and, less efficiently, Met from aminoacyl-tRNAs to the N-termini of proteins containing an N-terminal arginine or lysine. This Pseudomonas paraeruginosa (strain DSM 24068 / PA7) (Pseudomonas aeruginosa (strain PA7)) protein is Leucyl/phenylalanyl-tRNA--protein transferase.